A 228-amino-acid chain; its full sequence is Nucleolar protein 12 (228 aa).

Residues 1 to 22 form a disordered region; that stretch reads MGKSDRLQQGSKGKGGGKRKHG. A coiled-coil region spans residues 40-103; that stretch reads FHKRKLERRR…AITATTECVQ (64 aa). The span at 126–145 shows a compositional bias: basic and acidic residues; that stretch reads LLEPAQRDGGDGEERERTEA. The disordered stretch occupies residues 126 to 228; that stretch reads LLEPAQRDGG…QTGRNERSQD (103 aa). Over residues 158-170 the composition is skewed to polar residues; it reads KIQSLTASLNSLV. The span at 171 to 180 shows a compositional bias: basic residues; that stretch reads KQKKRRKQKR. Residues 181–195 show a composition bias toward basic and acidic residues; it reads RQEAKQRSHQSDRKS. A compositionally biased stretch (basic residues) spans 204-220; it reads NKQKQGKSTKRQRRRQT.

It belongs to the RRP17 family.

It localises to the nucleus. The protein localises to the nucleolus. Its function is as follows. May bind to rRNA. This Danio rerio (Zebrafish) protein is Nucleolar protein 12 (nol12).